An 84-amino-acid polypeptide reads, in one-letter code: Beta-defensin 119 (84 aa).

A signal peptide spans 1 to 21; it reads MKLLYLFLAILLAIEEPVISG. Cystine bridges form between cysteine 35–cysteine 49 and cysteine 39–cysteine 56.

This sequence belongs to the beta-defensin family.

The protein localises to the secreted. In terms of biological role, has antibacterial activity. The sequence is that of Beta-defensin 119 (DEFB119) from Pan troglodytes (Chimpanzee).